The primary structure comprises 182 residues: Antigenic integral membrane glycoprotein (182 aa).

A signal peptide spans M1–T35. N-linked (GlcNAc...) asparagine glycosylation is found at N88 and N120. Residues E162–Y180 form a helical membrane-spanning segment. C168 carries S-palmitoyl cysteine lipidation.

The protein localises to the cell membrane. Functionally, major antigen in the surface tegument. The polypeptide is Antigenic integral membrane glycoprotein (Schistosoma mansoni (Blood fluke)).